The sequence spans 547 residues: MDIIFGRNRKEQLEPVRAKVTGKIPAWLQGTLLRNGPGMHTVGESRYNHWFDGLALLHSFTIRDGEVYYRSKYLRSDTYNTNIEANRIVVSEFGTMAYPDPCKNIFSKAFSYLSHTIPDFTDNCLINIMKCGEDFYATSETNYIRKINPQTLETLEKVDYRKYVAVNLATSHPHYDEAGNVLNMGTSIVEKGKTKYVIFKIPATVPEGKKQGKSPWKHTEVFCSIPSRSLLSPSYYHSFGVTENYVIFLEQPFRLDILKMATAYIRRMSWASCLAFHREEKTYIHIIDQRTRQPVQTKFYTDAMVVFHHVNAYEEDGCIVFDVIAYEDNSLYQLFYLANLNQDFKENSRLTSVPTLRRFAVPLHVDKNAEVGTNLIKVASTTATALKEEDGQVYCQPEFLYEGLELPRVNYAHNGKQYRYVFATGVQWSPIPTKIIKYDILTKSSLKWREDDCWPAEPLFVPAPGAKDEDDGVILSAIVSTDPQKLPFLLILDAKSFTELARASVDVDMHMDLHGLFITDMDWDTKKQAASEEQRDRASDCHGAPLT.

Fe cation-binding residues include His-172, His-237, His-308, and His-514. The span at 528-540 (QAASEEQRDRASD) shows a compositional bias: basic and acidic residues. The interval 528–547 (QAASEEQRDRASDCHGAPLT) is disordered.

The protein belongs to the carotenoid oxygenase family. It depends on Fe(2+) as a cofactor. As to expression, highly expressed in retinal pigment epithelium. Also expressed in kidney, testis, liver, brain, small intestine and colon.

The protein resides in the cytoplasm. It is found in the cytosol. The enzyme catalyses all-trans-beta-carotene + O2 = 2 all-trans-retinal. The protein operates within cofactor metabolism; retinol metabolism. Its function is as follows. Symmetrically cleaves beta-carotene into two molecules of retinal using a dioxygenase mechanism. The chain is Beta,beta-carotene 15,15'-dioxygenase from Homo sapiens (Human).